The following is a 1438-amino-acid chain: DNA polymerase III PolC-type (1438 aa).

Residues 422–578 (YVVFDVETTG…YDTESTAYIF (157 aa)) enclose the Exonuclease domain.

The protein belongs to the DNA polymerase type-C family. PolC subfamily.

The protein resides in the cytoplasm. It catalyses the reaction DNA(n) + a 2'-deoxyribonucleoside 5'-triphosphate = DNA(n+1) + diphosphate. Required for replicative DNA synthesis. This DNA polymerase also exhibits 3' to 5' exonuclease activity. The sequence is that of DNA polymerase III PolC-type from Staphylococcus haemolyticus (strain JCSC1435).